We begin with the raw amino-acid sequence, 220 residues long: Large ribosomal subunit protein uL3 (220 aa).

Residues 127-155 (FQGAIKRHGQSRGPMSHSSHFHRAPDSVG) are disordered.

This sequence belongs to the universal ribosomal protein uL3 family. In terms of assembly, part of the 50S ribosomal subunit. Forms a cluster with proteins L14 and L19.

One of the primary rRNA binding proteins, it binds directly near the 3'-end of the 23S rRNA, where it nucleates assembly of the 50S subunit. In Staphylococcus aureus (strain JH9), this protein is Large ribosomal subunit protein uL3.